The following is a 414-amino-acid chain: Isocitrate dehydrogenase [NADP] cytoplasmic (414 aa).

An N-acetylserine modification is found at serine 2. Tyrosine 42 carries the phosphotyrosine modification. Residue 75–77 (TIT) participates in NADP(+) binding. Threonine 77 contributes to the substrate binding site. Residue lysine 81 is modified to N6-acetyllysine. Arginine 82 contributes to the NADP(+) binding site. Substrate-binding positions include 94–100 (SPNGTIR) and arginine 109. N6-succinyllysine is present on lysine 126. Substrate-binding residues include arginine 132 and lysine 212. N6-acetyllysine is present on residues lysine 224 and lysine 233. Aspartate 252 is a binding site for Mn(2+). Lysine 260 is an NADP(+) binding site. Aspartate 275 and aspartate 279 together coordinate Mn(2+). 310–315 (GTVTRH) lines the NADP(+) pocket. N6-acetyllysine is present on lysine 321. Asparagine 328 is an NADP(+) binding site. Phosphoserine is present on serine 389. N6-succinyllysine is present on lysine 400.

The protein belongs to the isocitrate and isopropylmalate dehydrogenases family. Homodimer. It depends on Mg(2+) as a cofactor. Requires Mn(2+) as cofactor. Acetylation at Lys-374 dramatically reduces catalytic activity. Expressed preferentially in corneal epithelium. Constitute approximately 13% of the total soluble bovine corneal epithelial proteins.

Its subcellular location is the cytoplasm. It is found in the cytosol. The enzyme catalyses D-threo-isocitrate + NADP(+) = 2-oxoglutarate + CO2 + NADPH. Its function is as follows. Catalyzes the NADP(+)-dependent oxidative decarboxylation of isocitrate (D-threo-isocitrate) to 2-ketoglutarate (2-oxoglutarate), which is required by other enzymes such as the phytanoyl-CoA dioxygenase. Plays a critical role in the generation of NADPH, an important cofactor in many biosynthesis pathways. May act as a corneal epithelial crystallin and may be involved in maintaining corneal epithelial transparency. This Bos taurus (Bovine) protein is Isocitrate dehydrogenase [NADP] cytoplasmic (IDH1).